The sequence spans 245 residues: Thiopurine S-methyltransferase (245 aa).

The residue at position 14 (Ser-14) is a Phosphoserine. Residue 29–40 coordinates S-adenosyl-L-methionine; that stretch reads WREKWVDGKIGF. Phe-40 provides a ligand contact to substrate. Lys-58 is subject to N6-acetyllysine. Positions 69, 90, and 152 each coordinate S-adenosyl-L-methionine.

Belongs to the class I-like SAM-binding methyltransferase superfamily. TPMT family. Monomer.

It localises to the cytoplasm. It catalyses the reaction S-adenosyl-L-methionine + a thiopurine = S-adenosyl-L-homocysteine + a thiopurine S-methylether.. The protein is Thiopurine S-methyltransferase (TPMT) of Panthera tigris (Tiger).